Reading from the N-terminus, the 157-residue chain is Protein Smg homolog (157 aa).

It belongs to the Smg family.

The sequence is that of Protein Smg homolog from Shewanella pealeana (strain ATCC 700345 / ANG-SQ1).